The following is a 97-amino-acid chain: Acylphosphatase (97 aa).

Positions 9–97 constitute an Acylphosphatase-like domain; sequence RKHIVVTGLV…ETARAFGVRQ (89 aa). Catalysis depends on residues Arg-24 and Asn-42.

It belongs to the acylphosphatase family.

The catalysed reaction is an acyl phosphate + H2O = a carboxylate + phosphate + H(+). The chain is Acylphosphatase (acyP) from Bifidobacterium longum (strain NCC 2705).